Reading from the N-terminus, the 216-residue chain is Ribonuclease T (216 aa).

Residues 28-202 (VVVDVETGGF…YDTEQTARLF (175 aa)) form the Exonuclease domain. Mg(2+) is bound by residues Asp31, Glu33, His189, and Asp194. Catalysis depends on His189, which acts as the Proton donor/acceptor.

This sequence belongs to the RNase T family. As to quaternary structure, homodimer. It depends on Mg(2+) as a cofactor.

In terms of biological role, trims short 3' overhangs of a variety of RNA species, leaving a one or two nucleotide 3' overhang. Responsible for the end-turnover of tRNA: specifically removes the terminal AMP residue from uncharged tRNA (tRNA-C-C-A). Also appears to be involved in tRNA biosynthesis. In Xanthomonas campestris pv. campestris (strain 8004), this protein is Ribonuclease T.